The following is a 265-amino-acid chain: Polyprenol monophosphomannose synthase (265 aa).

A compositionally biased stretch (basic and acidic residues) spans 1–10 (MSVPGEREQG). Residues 1-21 (MSVPGEREQGAGEDPATVRPT) form a disordered region.

This sequence belongs to the glycosyltransferase 2 family. As to quaternary structure, interacts with Lnt (also called Ppm2, AC A0QZ13) upon coexpression in E.coli, which increases the PPM synthase activity of this protein.

It localises to the cytoplasm. The enzyme catalyses a di-trans,poly-cis-dolichyl phosphate + GDP-alpha-D-mannose = a di-trans,poly-cis-dolichyl beta-D-mannosyl phosphate + GDP. In terms of biological role, transfers mannose from GDP-mannose to lipid acceptors to form polyprenol monophosphomannose (PPM); catalytic activity in vitro is enhanced by Lnt (AC A0QZ13). PMM is an alkai-stable sugar donor which adds mannose-phosphate residues to triacylated-PIM2, eventually leading to generation of the cell wall glycolipid lipoglycan modulins lipoarabinomannan (LAM) and lipomannan (LM). The protein is Polyprenol monophosphomannose synthase of Mycolicibacterium smegmatis (strain ATCC 700084 / mc(2)155) (Mycobacterium smegmatis).